We begin with the raw amino-acid sequence, 595 residues long: DNA polymerase (595 aa).

Residues 1-212 (MIELRHEVQG…CKSLTPLVPD (212 aa)) enclose the 3'-5' exonuclease domain. The tract at residues 213 to 595 (VSRSLVPYEH…SWGSLYGADY (383 aa)) is polymerase.

The protein belongs to the DNA polymerase type-A family.

It catalyses the reaction DNA(n) + a 2'-deoxyribonucleoside 5'-triphosphate = DNA(n+1) + diphosphate. Its function is as follows. Replicates viral genomic DNA. This polymerase possesses two enzymatic activities: DNA synthesis (polymerase) and an exonucleolytic activity that degrades single-stranded DNA in the 3'-5' direction. In Mycobacterium phage L5 (Mycobacteriophage L5), this protein is DNA polymerase (44).